The sequence spans 149 residues: Transcriptional repressor NrdR (149 aa).

A zinc finger spans residues Cys3–Cys34. The 91-residue stretch at Ile49–Thr139 folds into the ATP-cone domain.

The protein belongs to the NrdR family. Zn(2+) serves as cofactor.

Negatively regulates transcription of bacterial ribonucleotide reductase nrd genes and operons by binding to NrdR-boxes. This is Transcriptional repressor NrdR from Clostridium perfringens (strain SM101 / Type A).